A 226-amino-acid polypeptide reads, in one-letter code: MKVLILACLVALALARETIESLSSSEESITEYKQKVEKVKHEDQQQGEDEHQDKIYPSFQPQPLIYPFVEPIPYGFLPQNILPLAQPAVVLPVPQPEIMEVPKAKDTVYTKGRVMPVLKSPTIPFFDPQIPKLTDLENLHLPLPLLQPLMQQVPQPIPQTLALPPQPLWSVPQPKVLPIPQQVVPYPQRAVPVQALLLNQELLLNPTHQIYPVTQPLAPVHNPISV.

Positions 1–15 are cleaved as a signal peptide; sequence MKVLILACLVALALA. A Phosphothreonine; in form 5-P modification is found at Thr-18. At Ser-21 the chain carries Phosphoserine; in form 4-P and form 5-P. Ser-23 is modified (phosphoserine; in form 3-P, form 4-P and form 5-P). 2 positions are modified to phosphoserine; in form 1-P, form 2-P, form 3-P, form 4-P and form 5-P: Ser-24 and Ser-25.

The protein belongs to the beta-casein family. Post-translationally, form 1-P is phosphorylated once; half of the molecules are phosphorylated on Ser-24, half on Ser-25. In terms of tissue distribution, mammary gland specific. Secreted in milk.

The protein localises to the secreted. Functionally, important role in determination of the surface properties of the casein micelles. This chain is Beta-casein (CSN2), found in Homo sapiens (Human).